The primary structure comprises 185 residues: Large ribosomal subunit protein uL5 (185 aa).

This sequence belongs to the universal ribosomal protein uL5 family. As to quaternary structure, part of the 50S ribosomal subunit; part of the 5S rRNA subcomplex. Contacts the 5S rRNA and the P site tRNA. Forms a bridge to the 30S subunit in the 70S ribosome. In terms of processing, both N-terminus methionine truncation and retention have been observed for this protein. Post-translationally, may be methylated twice, on undetermined residues.

Its function is as follows. This is one of the proteins that bind and probably mediate the attachment of the 5S RNA into the large ribosomal subunit, where it forms part of the central protuberance. In the 70S ribosome it contacts protein S13 of the 30S subunit (bridge B1b), connecting the 2 subunits; this bridge is implicated in subunit movement. Contacts the P site tRNA; the 5S rRNA and some of its associated proteins might help stabilize positioning of ribosome-bound tRNAs. The sequence is that of Large ribosomal subunit protein uL5 from Rhodopseudomonas palustris (strain ATCC BAA-98 / CGA009).